We begin with the raw amino-acid sequence, 324 residues long: Glycerol-3-phosphate dehydrogenase [NAD(P)+] (324 aa).

NADPH contacts are provided by Ser10, Phe11, Arg31, and Lys106. Sn-glycerol 3-phosphate is bound by residues Lys106, Gly134, and Ser136. Ala138 lines the NADPH pocket. Lys189, Asp244, Ser254, Arg255, and Asn256 together coordinate sn-glycerol 3-phosphate. The active-site Proton acceptor is Lys189. Arg255 serves as a coordination point for NADPH. NADPH contacts are provided by Ile279 and Glu281.

Belongs to the NAD-dependent glycerol-3-phosphate dehydrogenase family.

The protein resides in the cytoplasm. It carries out the reaction sn-glycerol 3-phosphate + NAD(+) = dihydroxyacetone phosphate + NADH + H(+). The catalysed reaction is sn-glycerol 3-phosphate + NADP(+) = dihydroxyacetone phosphate + NADPH + H(+). It functions in the pathway membrane lipid metabolism; glycerophospholipid metabolism. Its function is as follows. Catalyzes the reduction of the glycolytic intermediate dihydroxyacetone phosphate (DHAP) to sn-glycerol 3-phosphate (G3P), the key precursor for phospholipid synthesis. In Ehrlichia canis (strain Jake), this protein is Glycerol-3-phosphate dehydrogenase [NAD(P)+].